Here is a 441-residue protein sequence, read N- to C-terminus: Proline--tRNA ligase (441 aa).

This sequence belongs to the class-II aminoacyl-tRNA synthetase family. ProS type 2 subfamily. In terms of assembly, homodimer.

The protein resides in the cytoplasm. It catalyses the reaction tRNA(Pro) + L-proline + ATP = L-prolyl-tRNA(Pro) + AMP + diphosphate. In terms of biological role, catalyzes the attachment of proline to tRNA(Pro) in a two-step reaction: proline is first activated by ATP to form Pro-AMP and then transferred to the acceptor end of tRNA(Pro). In Methylorubrum extorquens (strain PA1) (Methylobacterium extorquens), this protein is Proline--tRNA ligase.